The chain runs to 672 residues: Threonine--tRNA ligase (672 aa).

Residues 2–60 enclose the TGS domain; the sequence is SEPKNILLTVDGELREVTHGTTGLDLFREKPTTAVMRVDGLLWDLAREIPAGASVESVD. Positions 260–567 are catalytic; sequence DHRKLGAELD…LTEHYAGAFP (308 aa). Positions 366, 417, and 544 each coordinate Zn(2+).

It belongs to the class-II aminoacyl-tRNA synthetase family. As to quaternary structure, homodimer. Requires Zn(2+) as cofactor.

The protein localises to the cytoplasm. It catalyses the reaction tRNA(Thr) + L-threonine + ATP = L-threonyl-tRNA(Thr) + AMP + diphosphate + H(+). Catalyzes the attachment of threonine to tRNA(Thr) in a two-step reaction: L-threonine is first activated by ATP to form Thr-AMP and then transferred to the acceptor end of tRNA(Thr). Also edits incorrectly charged L-seryl-tRNA(Thr). The chain is Threonine--tRNA ligase from Micrococcus luteus (strain ATCC 4698 / DSM 20030 / JCM 1464 / CCM 169 / CCUG 5858 / IAM 1056 / NBRC 3333 / NCIMB 9278 / NCTC 2665 / VKM Ac-2230) (Micrococcus lysodeikticus).